A 155-amino-acid polypeptide reads, in one-letter code: Transcription antitermination protein NusB (155 aa).

Belongs to the NusB family.

Its function is as follows. Involved in transcription antitermination. Required for transcription of ribosomal RNA (rRNA) genes. Binds specifically to the boxA antiterminator sequence of the ribosomal RNA (rrn) operons. The sequence is that of Transcription antitermination protein NusB from Halorhodospira halophila (strain DSM 244 / SL1) (Ectothiorhodospira halophila (strain DSM 244 / SL1)).